The chain runs to 287 residues: Glycine--tRNA ligase alpha subunit (287 aa).

It belongs to the class-II aminoacyl-tRNA synthetase family. As to quaternary structure, tetramer of two alpha and two beta subunits.

The protein resides in the cytoplasm. It catalyses the reaction tRNA(Gly) + glycine + ATP = glycyl-tRNA(Gly) + AMP + diphosphate. The protein is Glycine--tRNA ligase alpha subunit of Campylobacter jejuni subsp. doylei (strain ATCC BAA-1458 / RM4099 / 269.97).